The following is a 254-amino-acid chain: 5'-nucleotidase SurE (254 aa).

D8, D9, S38, and N91 together coordinate a divalent metal cation.

It belongs to the SurE nucleotidase family. The cofactor is a divalent metal cation.

The protein localises to the cytoplasm. It carries out the reaction a ribonucleoside 5'-phosphate + H2O = a ribonucleoside + phosphate. Nucleotidase that shows phosphatase activity on nucleoside 5'-monophosphates. The protein is 5'-nucleotidase SurE of Anaeromyxobacter sp. (strain Fw109-5).